A 383-amino-acid polypeptide reads, in one-letter code: Aquaporin-5 (383 aa).

Over 1 to 46 the chain is Cytoplasmic; it reads MSVTTLNGQPTLNISGPGQTALSRLDPLKKVFTKFFSSIPQKVRGH. The helical transmembrane segment at 47 to 67 threads the bilayer; it reads VVAVIGELIGTTAFLFIAFSA. Over 68-93 the chain is Extracellular; that stretch reads AEVALASANDNKGDKVSYETKSISTT. Residues 94–114 form a helical membrane-spanning segment; sequence QILFIAFGAGISLVVNAWTFF. Position 115 (R115) is a topological domain, cytoplasmic. A helical membrane pass occupies residues 116–136; it reads ISGGLFDPAVSIALFFVGAID. The NPA 1 motif lies at 122 to 124; the sequence is DPA. Topologically, residues 137-140 are extracellular; sequence LTRC. A helical transmembrane segment spans residues 141 to 161; the sequence is VLLCIAQCLGAIAASAMAYGL. Residues 162-180 are Cytoplasmic-facing; it reads YHGGLHTATTLKPGMSPAQ. Residues 181 to 201 traverse the membrane as a helical segment; that stretch reads GVIVEMILTCQLCFTVLMLAA. Over 202–207 the chain is Extracellular; that stretch reads EKHEAT. The chain crosses the membrane as a helical span at residues 208–228; the sequence is FLAPLGIGLSVFIGELAGVFW. At 229 to 252 the chain is on the cytoplasmic side; sequence TGGSMNPARSLGPAVVTLSFPSYH. Positions 234-236 match the NPA 2 motif; that stretch reads NPA. The helical transmembrane segment at 253-273 threads the bilayer; that stretch reads WIYWVGPIAGAGLASIIYKLI. The Extracellular portion of the chain corresponds to 274–383; sequence KALEYETAQL…DGFFGEMYAD (110 aa). Polar residues predominate over residues 332 to 349; that stretch reads ARKSSSLVPTKSTKSGNS. The tract at residues 332-383 is disordered; that stretch reads ARKSSSLVPTKSTKSGNSEVKKTETVVEEPAKTQPKPAPAADDGFFGEMYAD. Residues 350-362 show a composition bias toward basic and acidic residues; the sequence is EVKKTETVVEEPA. The segment covering 363 to 372 has biased composition (low complexity); the sequence is KTQPKPAPAA.

It belongs to the MIP/aquaporin (TC 1.A.8) family.

The protein localises to the membrane. The catalysed reaction is H2O(in) = H2O(out). Water channel required to facilitate the transport of water across membranes. May play a role in the vegetative growth. The protein is Aquaporin-5 of Botryotinia fuckeliana (strain B05.10) (Noble rot fungus).